The sequence spans 199 residues: 5'-deoxynucleotidase HDDC2 (199 aa).

An N-acetylalanine modification is found at Ala-2. Ser-5 carries the post-translational modification Phosphoserine. Positions 41–143 constitute an HD domain; it reads VSDHMYRMAV…VKQLDQCEMI (103 aa). His-44, His-72, Asp-73, Glu-76, Asp-81, Ile-82, and Asp-138 together coordinate a divalent metal cation. At Ser-199 the chain carries Phosphoserine.

Belongs to the HDDC2 family. In terms of assembly, homodimer. Mn(2+) is required as a cofactor. Co(2+) serves as cofactor. It depends on Mg(2+) as a cofactor.

It carries out the reaction a 2'-deoxyribonucleoside 5'-phosphate + H2O = a 2'-deoxyribonucleoside + phosphate. Functionally, catalyzes the dephosphorylation of the nucleoside 5'-monophosphates deoxyadenosine monophosphate (dAMP), deoxycytidine monophosphate (dCMP), deoxyguanosine monophosphate (dGMP) and deoxythymidine monophosphate (dTMP). The protein is 5'-deoxynucleotidase HDDC2 (Hddc2) of Mus musculus (Mouse).